A 241-amino-acid chain; its full sequence is ATP-dependent dethiobiotin synthetase BioD (241 aa).

13 to 18 is an ATP binding site; it reads DIGKTV. Mg(2+) is bound at residue Thr-17. Lys-38 is an active-site residue. Ser-42 provides a ligand contact to substrate. ATP is bound by residues Asp-55, 116–119, and 180–181; these read EGSG and NK. 2 residues coordinate Mg(2+): Asp-55 and Glu-116.

Belongs to the dethiobiotin synthetase family. In terms of assembly, homodimer. Requires Mg(2+) as cofactor.

It is found in the cytoplasm. The enzyme catalyses (7R,8S)-7,8-diammoniononanoate + CO2 + ATP = (4R,5S)-dethiobiotin + ADP + phosphate + 3 H(+). The protein operates within cofactor biosynthesis; biotin biosynthesis; biotin from 7,8-diaminononanoate: step 1/2. In terms of biological role, catalyzes a mechanistically unusual reaction, the ATP-dependent insertion of CO2 between the N7 and N8 nitrogen atoms of 7,8-diaminopelargonic acid (DAPA, also called 7,8-diammoniononanoate) to form a ureido ring. The protein is ATP-dependent dethiobiotin synthetase BioD of Clostridium kluyveri (strain NBRC 12016).